Consider the following 496-residue polypeptide: Aspartyl/glutamyl-tRNA(Asn/Gln) amidotransferase subunit B (496 aa).

It belongs to the GatB/GatE family. GatB subfamily. Heterotrimer of A, B and C subunits.

The catalysed reaction is L-glutamyl-tRNA(Gln) + L-glutamine + ATP + H2O = L-glutaminyl-tRNA(Gln) + L-glutamate + ADP + phosphate + H(+). The enzyme catalyses L-aspartyl-tRNA(Asn) + L-glutamine + ATP + H2O = L-asparaginyl-tRNA(Asn) + L-glutamate + ADP + phosphate + 2 H(+). Allows the formation of correctly charged Asn-tRNA(Asn) or Gln-tRNA(Gln) through the transamidation of misacylated Asp-tRNA(Asn) or Glu-tRNA(Gln) in organisms which lack either or both of asparaginyl-tRNA or glutaminyl-tRNA synthetases. The reaction takes place in the presence of glutamine and ATP through an activated phospho-Asp-tRNA(Asn) or phospho-Glu-tRNA(Gln). This chain is Aspartyl/glutamyl-tRNA(Asn/Gln) amidotransferase subunit B, found in Picosynechococcus sp. (strain ATCC 27264 / PCC 7002 / PR-6) (Agmenellum quadruplicatum).